Reading from the N-terminus, the 153-residue chain is Ribosomal RNA large subunit methyltransferase H (153 aa).

S-adenosyl-L-methionine contacts are provided by leucine 71 and glycine 102.

Belongs to the RNA methyltransferase RlmH family. As to quaternary structure, homodimer.

It localises to the cytoplasm. The catalysed reaction is pseudouridine(1915) in 23S rRNA + S-adenosyl-L-methionine = N(3)-methylpseudouridine(1915) in 23S rRNA + S-adenosyl-L-homocysteine + H(+). Functionally, specifically methylates the pseudouridine at position 1915 (m3Psi1915) in 23S rRNA. The polypeptide is Ribosomal RNA large subunit methyltransferase H (Anaeromyxobacter dehalogenans (strain 2CP-1 / ATCC BAA-258)).